The following is a 1053-amino-acid chain: Carbamoyl phosphate synthase large chain (1053 aa).

The tract at residues 1 to 397 (MPKRTDIKKV…SFMKAKRSID (397 aa)) is carboxyphosphate synthetic domain. ATP contacts are provided by Arg127, Arg167, Gly173, Gly174, Glu206, Val208, Glu213, Gly239, Ile240, His241, Gln282, and Glu294. The ATP-grasp 1 domain occupies 131 to 323 (RDLMNEIGEP…IARVAAKIAI (193 aa)). Residues Gln282, Glu294, and Asn296 each coordinate Mg(2+). Residues Gln282, Glu294, and Asn296 each coordinate Mn(2+). Positions 398–530 (TDVRTHTSPS…YSTREGTSEI (133 aa)) are oligomerization domain. The interval 531–919 (VRDKKQKILI…YKACISADNE (389 aa)) is carbamoyl phosphate synthetic domain. One can recognise an ATP-grasp 2 domain in the interval 661 to 852 (SVLLTTLQIP…IAKIAAKVMI (192 aa)). Residues Arg697, Ser736, Leu738, Glu743, Gly768, Ile769, His770, Ser771, Gln811, and Glu823 each coordinate ATP. Mg(2+)-binding residues include Gln811, Glu823, and Asn825. Mn(2+) is bound by residues Gln811, Glu823, and Asn825. The MGS-like domain maps to 918–1053 (NELPLKGNVF…TLEPLSHYLR (136 aa)). Residues 920 to 1053 (LPLKGNVFVS…TLEPLSHYLR (134 aa)) are allosteric domain.

The protein belongs to the CarB family. Composed of two chains; the small (or glutamine) chain promotes the hydrolysis of glutamine to ammonia, which is used by the large (or ammonia) chain to synthesize carbamoyl phosphate. Tetramer of heterodimers (alpha,beta)4. Requires Mg(2+) as cofactor. Mn(2+) is required as a cofactor.

It catalyses the reaction hydrogencarbonate + L-glutamine + 2 ATP + H2O = carbamoyl phosphate + L-glutamate + 2 ADP + phosphate + 2 H(+). The catalysed reaction is hydrogencarbonate + NH4(+) + 2 ATP = carbamoyl phosphate + 2 ADP + phosphate + 2 H(+). It participates in amino-acid biosynthesis; L-arginine biosynthesis; carbamoyl phosphate from bicarbonate: step 1/1. The protein operates within pyrimidine metabolism; UMP biosynthesis via de novo pathway; (S)-dihydroorotate from bicarbonate: step 1/3. Its function is as follows. Large subunit of the glutamine-dependent carbamoyl phosphate synthetase (CPSase). CPSase catalyzes the formation of carbamoyl phosphate from the ammonia moiety of glutamine, carbonate, and phosphate donated by ATP, constituting the first step of 2 biosynthetic pathways, one leading to arginine and/or urea and the other to pyrimidine nucleotides. The large subunit (synthetase) binds the substrates ammonia (free or transferred from glutamine from the small subunit), hydrogencarbonate and ATP and carries out an ATP-coupled ligase reaction, activating hydrogencarbonate by forming carboxy phosphate which reacts with ammonia to form carbamoyl phosphate. The sequence is that of Carbamoyl phosphate synthase large chain from Methanoregula boonei (strain DSM 21154 / JCM 14090 / 6A8).